The following is a 240-amino-acid chain: NADH-quinone oxidoreductase subunit C (240 aa).

The segment at 1–82 (MSEEEKPKPK…PVDENRDPEP (82 aa)) is disordered. Over residues 11–20 (LSPALAAKMA) the composition is skewed to low complexity. Residues 67-82 (DKPKAEPVDENRDPEP) are compositionally biased toward basic and acidic residues.

The protein belongs to the complex I 30 kDa subunit family. As to quaternary structure, NDH-1 is composed of 14 different subunits. Subunits NuoB, C, D, E, F, and G constitute the peripheral sector of the complex.

Its subcellular location is the cell inner membrane. The catalysed reaction is a quinone + NADH + 5 H(+)(in) = a quinol + NAD(+) + 4 H(+)(out). Functionally, NDH-1 shuttles electrons from NADH, via FMN and iron-sulfur (Fe-S) centers, to quinones in the respiratory chain. The immediate electron acceptor for the enzyme in this species is believed to be a menaquinone. Couples the redox reaction to proton translocation (for every two electrons transferred, four hydrogen ions are translocated across the cytoplasmic membrane), and thus conserves the redox energy in a proton gradient. The chain is NADH-quinone oxidoreductase subunit C from Chloroherpeton thalassium (strain ATCC 35110 / GB-78).